A 1414-amino-acid polypeptide reads, in one-letter code: DNA-directed RNA polymerase subunit beta' (1414 aa).

Zn(2+) contacts are provided by C70, C72, C85, and C88. Mg(2+) contacts are provided by D460, D462, and D464. Zn(2+)-binding residues include C814, C888, C895, and C898. Low complexity predominate over residues 1392–1403 (EQALSEALKSSA). The disordered stretch occupies residues 1392-1414 (EQALSEALKSSAPQEAKAAQKDE).

Belongs to the RNA polymerase beta' chain family. In terms of assembly, the RNAP catalytic core consists of 2 alpha, 1 beta, 1 beta' and 1 omega subunit. When a sigma factor is associated with the core the holoenzyme is formed, which can initiate transcription. Mg(2+) is required as a cofactor. Requires Zn(2+) as cofactor.

The enzyme catalyses RNA(n) + a ribonucleoside 5'-triphosphate = RNA(n+1) + diphosphate. Functionally, DNA-dependent RNA polymerase catalyzes the transcription of DNA into RNA using the four ribonucleoside triphosphates as substrates. The polypeptide is DNA-directed RNA polymerase subunit beta' (Coxiella burnetii (strain Dugway 5J108-111)).